A 139-amino-acid polypeptide reads, in one-letter code: Large ribosomal subunit protein uL16 (139 aa).

This sequence belongs to the universal ribosomal protein uL16 family. As to quaternary structure, part of the 50S ribosomal subunit.

In terms of biological role, binds 23S rRNA and is also seen to make contacts with the A and possibly P site tRNAs. The sequence is that of Large ribosomal subunit protein uL16 from Prosthecochloris aestuarii (strain DSM 271 / SK 413).